The sequence spans 294 residues: Elongation factor Ts (294 aa).

The segment at 81-84 is involved in Mg(2+) ion dislocation from EF-Tu; that stretch reads TDFV.

This sequence belongs to the EF-Ts family.

Its subcellular location is the cytoplasm. Associates with the EF-Tu.GDP complex and induces the exchange of GDP to GTP. It remains bound to the aminoacyl-tRNA.EF-Tu.GTP complex up to the GTP hydrolysis stage on the ribosome. The sequence is that of Elongation factor Ts from Hydrogenovibrio crunogenus (strain DSM 25203 / XCL-2) (Thiomicrospira crunogena).